Consider the following 390-residue polypeptide: 3-ketosteroid-9-alpha-monooxygenase, oxygenase component (390 aa).

Residues Trp-32–Val-134 form the Rieske domain. Cys-73, His-75, Cys-92, and His-95 together coordinate [2Fe-2S] cluster. Residues Asn-181, His-187, His-192, and Asp-311 each contribute to the Fe cation site.

Homotrimer. The two-component system 3-ketosteroid-9-alpha-monooxygenase is composed of an oxygenase component KshA and a reductase component KshB. Requires [2Fe-2S] cluster as cofactor. Fe cation is required as a cofactor.

The catalysed reaction is androsta-1,4-diene-3,17-dione + 2 reduced [2Fe-2S]-[ferredoxin] + O2 + 2 H(+) = 9alpha-hydroxyandrosta-1,4-diene-3,17-dione + 2 oxidized [2Fe-2S]-[ferredoxin] + H2O. It functions in the pathway steroid metabolism; cholesterol degradation. Functionally, probably involved in the degradation of cholesterol. In vitro, catalyzes the introduction of a 9alpha-hydroxyl moiety into the ring B of 3-ketosteroid substrates such as 1,4-androstadiene-3,17-dione (ADD), 4-androstene-3,17-dione (AD), 4-androstene-17beta-ol-3-one (testosterone), 4-pregnene-3,20-dione (progesterone), 19-nor-4-androstene-3,17-dione, 1-(5alpha)-androstene-3,17-dione, 5alpha-androstane-3,17-dione, 5beta-androstane-3,17-dione, 5alpha-androstane-17beta-ol-3-one (stanolon), 11beta-hydrocortisone, 3-oxo-23,24-bisnorcholesta-4-en-22-oate (4-BNC), 23,24-bisnorcholesta-4-ene-22-oate, 3-oxo-23,24-bisnorcholesta-1,4-dien-22-oate (1,4-BNC) and 3-oxo-23,24-bisnorcholesta-1,4-dien-22-oyl-coenzyme A thioester (1,4-BNC-CoA). KshA5 has the broadest substrate range without a clear substrate preference and is active with Delta-4, Delta-1,4, 5alpha-H and 5beta-H steroids, as well as with steroids having bulky aliphatic side chains and an isopropionyl side chain at C17. This is 3-ketosteroid-9-alpha-monooxygenase, oxygenase component from Rhodococcus rhodochrous.